We begin with the raw amino-acid sequence, 529 residues long: Peptide chain release factor 3 (529 aa).

The 270-residue stretch at 11–280 folds into the tr-type G domain; the sequence is AKRRTFAIIS…GLIEWAPQPM (270 aa). GTP is bound by residues 20-27, 88-92, and 142-145; these read SHPDAGKT, DTPGH, and NKLD.

The protein belongs to the TRAFAC class translation factor GTPase superfamily. Classic translation factor GTPase family. PrfC subfamily.

The protein resides in the cytoplasm. Increases the formation of ribosomal termination complexes and stimulates activities of RF-1 and RF-2. It binds guanine nucleotides and has strong preference for UGA stop codons. It may interact directly with the ribosome. The stimulation of RF-1 and RF-2 is significantly reduced by GTP and GDP, but not by GMP. The protein is Peptide chain release factor 3 of Enterobacter sp. (strain 638).